Reading from the N-terminus, the 196-residue chain is uncharacterized protein (196 aa).

CBS domains lie at 10 to 69 (ARRD…NPDE) and 76 to 132 (MSQP…LVAT). Positions 153–187 (IIEGVCDLCETYSEELRFVDGVWVCPECYEDILGR) constitute an ACP-type MB domain. Cys-158, Cys-161, Cys-177, and Cys-180 together coordinate Fe cation. Zn(2+) contacts are provided by Cys-158, Cys-161, Cys-177, and Cys-180.

This is an uncharacterized protein from Methanopyrus kandleri (strain AV19 / DSM 6324 / JCM 9639 / NBRC 100938).